The chain runs to 209 residues: Protein GrpE (209 aa).

A disordered region spans residues 1–63 (MKKSRKKENM…NPEEACREEN (63 aa)). Basic and acidic residues-rich tracts occupy residues 7-42 (KENM…KVSP) and 50-63 (EAEK…REEN).

The protein belongs to the GrpE family. As to quaternary structure, homodimer.

It localises to the cytoplasm. Participates actively in the response to hyperosmotic and heat shock by preventing the aggregation of stress-denatured proteins, in association with DnaK and GrpE. It is the nucleotide exchange factor for DnaK and may function as a thermosensor. Unfolded proteins bind initially to DnaJ; upon interaction with the DnaJ-bound protein, DnaK hydrolyzes its bound ATP, resulting in the formation of a stable complex. GrpE releases ADP from DnaK; ATP binding to DnaK triggers the release of the substrate protein, thus completing the reaction cycle. Several rounds of ATP-dependent interactions between DnaJ, DnaK and GrpE are required for fully efficient folding. This is Protein GrpE from Methanosarcina mazei (strain ATCC BAA-159 / DSM 3647 / Goe1 / Go1 / JCM 11833 / OCM 88) (Methanosarcina frisia).